The chain runs to 158 residues: Low molecular weight phosphotyrosine protein phosphatase (158 aa).

Alanine 2 is subject to N-acetylalanine. Catalysis depends on cysteine 13, which acts as the Nucleophile. Arginine 19 is a catalytic residue. Aspartate 130 acts as the Proton donor in catalysis. 2 positions are modified to phosphotyrosine: tyrosine 132 and tyrosine 133.

This sequence belongs to the low molecular weight phosphotyrosine protein phosphatase family. As to quaternary structure, interacts with EPHA2; dephosphorylates EPHA2. Interacts with EPHB1. Interacts with the SH3 domain of SPTAN1. In terms of processing, phosphorylated by LCK. Phosphorylation at Tyr-132 increases its phosphatase activity.

Its subcellular location is the cytoplasm. It carries out the reaction O-phospho-L-tyrosyl-[protein] + H2O = L-tyrosyl-[protein] + phosphate. The enzyme catalyses a phosphate monoester + H2O = an alcohol + phosphate. Its activity is regulated as follows. Inhibited by sulfhydryl reagents. Acts on tyrosine phosphorylated proteins, low-MW aryl phosphates and natural and synthetic acyl phosphates with differences in substrate specificity between isoform 1 and isoform 2. The chain is Low molecular weight phosphotyrosine protein phosphatase (ACP1) from Pongo abelii (Sumatran orangutan).